The sequence spans 133 residues: MSAEKISISLPKELYRELEDFIIRKGIPDRSKIFQIALRNYLDENRDGNEIIYGIINLVYDHEEASEALTEIQHEYNDSIISTLHLHVSEKICIEAIAVKGEKRKLVELNNKLGQIRGILKARLLISFPYEKT.

Residues His-74, His-85, His-87, and Cys-93 each coordinate Ni(2+).

It belongs to the transcriptional regulatory CopG/NikR family. The cofactor is Ni(2+).

In terms of biological role, transcriptional regulator. The sequence is that of Putative nickel-responsive regulator from Saccharolobus solfataricus (strain ATCC 35092 / DSM 1617 / JCM 11322 / P2) (Sulfolobus solfataricus).